Consider the following 1379-residue polypeptide: Hepatocyte growth factor receptor (1379 aa).

The first 24 residues, 1–24 (MKAPTVLAPGILVLLLSLVQRSHG), serve as a signal peptide directing secretion. The Extracellular segment spans residues 25–931 (ECKEALVKSE…VIVQPDQNFA (907 aa)). The Sema domain maps to 27-514 (KEALVKSEMN…TGKKITKIPL (488 aa)). The N-linked (GlcNAc...) asparagine glycan is linked to Asn45. Intrachain disulfides connect Cys95–Cys101, Cys98–Cys160, Cys133–Cys141, and Cys171–Cys174. A glycan (N-linked (GlcNAc...) asparagine) is linked at Asn106. Asn201 and Asn357 each carry an N-linked (GlcNAc...) asparagine glycan. 2 cysteine pairs are disulfide-bonded: Cys297–Cys362 and Cys384–Cys396. 2 N-linked (GlcNAc...) asparagine glycosylation sites follow: Asn398 and Asn404. 4 disulfide bridges follow: Cys519–Cys537, Cys525–Cys560, Cys528–Cys544, and Cys540–Cys550. IPT/TIG domains are found at residues 562 to 654 (PAVY…FSYV), 656 to 738 (PVIT…FSYR), and 741 to 835 (PVVY…LTYV). Residue Thr581 is glycosylated (O-linked (Man) threonine). N-linked (GlcNAc...) asparagine glycans are attached at residues Asn606 and Asn634. O-linked (Man) threonine glycans are attached at residues Thr675 and Thr760. N-linked (GlcNAc...) asparagine glycosylation is found at Asn784 and Asn878. A helical membrane pass occupies residues 932–954 (GLIIGAVSISVVVLLLSGLFLWM). Over 955 to 1379 (RKRKHKDLGS…QDNIDGEGNT (425 aa)) the chain is Cytoplasmic. Position 964 is a phosphoserine (Ser964). Thr975 is subject to Phosphothreonine. A phosphoserine mark is found at Ser988, Ser995, and Ser998. The residue at position 1001 (Tyr1001) is a Phosphotyrosine. The Protein kinase domain maps to 1076-1343 (VHFNEVIGRG…RISSIFSTFI (268 aa)). ATP is bound by residues 1082–1090 (IGRGHFGCV) and Lys1108. Asp1202 serves as the catalytic Proton acceptor. Positions 1210–1379 (LDEKFTVKVA…QDNIDGEGNT (170 aa)) are interaction with RANBP9. The residue at position 1228 (Tyr1228) is a Phosphotyrosine. A phosphotyrosine; by autocatalysis mark is found at Tyr1232 and Tyr1233. At Thr1287 the chain carries Phosphothreonine. The interaction with MUC20 stretch occupies residues 1318–1357 (WHPKAEMRPSFSELVSRISSIFSTFIGEHYVHVNATYVNV). Phosphotyrosine; by autocatalysis occurs at positions 1347 and 1354. A Phosphotyrosine modification is found at Tyr1363.

The protein belongs to the protein kinase superfamily. Tyr protein kinase family. In terms of assembly, heterodimer made of an alpha chain (50 kDa) and a beta chain (145 kDa) which are disulfide linked. Binds PLXNB1. Interacts when phosphorylated with downstream effectors including STAT3, PIK3R1, SRC, PCLG1, GRB2 and GAB1. When phosphorylated at Tyr-1354, interacts with INPPL1/SHIP2. Interacts with RANBP9 and RANBP10. Interacts with INPP5D/SHIP1. Interacts with SPSB1, SPSB2, SPSB4 and probably SPSB3. SPSB1 binding occurs in the presence and in the absence of HGF, however HGF treatment has a positive effect on this interaction. Interacts with MUC20; prevents interaction with GRB2 and suppresses hepatocyte growth factor-induced cell proliferation. Interacts with GRB10. Interacts with PTPN1 and PTPN2. Interacts with HSP90AA1 and HSP90AB1; the interaction suppresses MET kinase activity. Interacts with tensin TNS3. Interacts (when phosphorylated) with tensin TNS4 (via SH2 domain); the interaction increases MET protein stability by inhibiting MET endocytosis and subsequent lysosomal degradation. (Microbial infection) Interacts with L.monocytogenes InlB. InlB probably dimerizes upon binding to MET, which encourages subsequent dimerization of MET. Autophosphorylated in response to ligand binding on Tyr-1232 and Tyr-1233 in the kinase domain leading to further phosphorylation of Tyr-1347 and Tyr-1354 in the C-terminal multifunctional docking site. Dephosphorylated by PTPRJ at Tyr-1347 and Tyr-1363. Dephosphorylated by PTPN1 and PTPN2. In terms of processing, ubiquitinated. Ubiquitination by CBL regulates MET endocytosis, resulting in decreasing plasma membrane receptor abundance, and in endosomal degradation and/or recycling of internalized receptors. Post-translationally, O-mannosylation of IPT/TIG domains by TMEM260 is required for protein maturation. O-mannosylated residues are composed of single mannose glycans that are not elongated or modified. (Microbial infection) Tyrosine phosphorylation is stimulated by L.monocytogenes InlB.

The protein resides in the membrane. The catalysed reaction is L-tyrosyl-[protein] + ATP = O-phospho-L-tyrosyl-[protein] + ADP + H(+). With respect to regulation, in its inactive state, the C-terminal tail interacts with the catalytic domain and inhibits the kinase activity. Upon ligand binding, the C-terminal tail is displaced and becomes phosphorylated, thus increasing the kinase activity. Receptor tyrosine kinase that transduces signals from the extracellular matrix into the cytoplasm by binding to hepatocyte growth factor/HGF ligand. Regulates many physiological processes including proliferation, scattering, morphogenesis and survival. Ligand binding at the cell surface induces autophosphorylation of MET on its intracellular domain that provides docking sites for downstream signaling molecules. Following activation by ligand, interacts with the PI3-kinase subunit PIK3R1, PLCG1, SRC, GRB2, STAT3 or the adapter GAB1. Recruitment of these downstream effectors by MET leads to the activation of several signaling cascades including the RAS-ERK, PI3 kinase-AKT, or PLCgamma-PKC. The RAS-ERK activation is associated with the morphogenetic effects while PI3K/AKT coordinates prosurvival effects. During embryonic development, MET signaling plays a role in gastrulation, development and migration of neuronal precursors, angiogenesis and kidney formation. During skeletal muscle development, it is crucial for the migration of muscle progenitor cells and for the proliferation of secondary myoblasts. In adults, participates in wound healing as well as organ regeneration and tissue remodeling. Also promotes differentiation and proliferation of hematopoietic cells. May regulate cortical bone osteogenesis. Functionally, (Microbial infection) Acts as a receptor for Listeria monocytogenes internalin InlB, mediating entry of the pathogen into cells. This is Hepatocyte growth factor receptor (Met) from Mus musculus (Mouse).